The sequence spans 202 residues: Protein-methionine-sulfoxide reductase heme-binding subunit MsrQ (202 aa).

6 consecutive transmembrane segments (helical) span residues 8–28 (LAVF…AWIF), 42–62 (LGLG…LQKL), 75–95 (LGLW…VFIL), 110–130 (PYII…ITSN), 147–167 (LVYL…RADL), and 169–189 (EWTL…PSIA).

This sequence belongs to the MsrQ family. As to quaternary structure, heterodimer of a catalytic subunit (MsrP) and a heme-binding subunit (MsrQ). The cofactor is FMN. Requires heme b as cofactor.

It is found in the cell inner membrane. Functionally, part of the MsrPQ system that repairs oxidized periplasmic proteins containing methionine sulfoxide residues (Met-O), using respiratory chain electrons. Thus protects these proteins from oxidative-stress damage caused by reactive species of oxygen and chlorine generated by the host defense mechanisms. MsrPQ is essential for the maintenance of envelope integrity under bleach stress, rescuing a wide series of structurally unrelated periplasmic proteins from methionine oxidation. MsrQ provides electrons for reduction to the reductase catalytic subunit MsrP, using the quinone pool of the respiratory chain. The protein is Protein-methionine-sulfoxide reductase heme-binding subunit MsrQ of Pseudomonas aeruginosa (strain UCBPP-PA14).